Consider the following 500-residue polypeptide: Formate-nitrite transporter 3 (500 aa).

Residues 1-31 (MVLAASPEAYRKVIEYGIKKTKLRIDRLFLQ) are Cytoplasmic-facing. A helical transmembrane segment spans residues 32-52 (AIMAGIYVGMAGHACTALAGA). At 53-69 (YSTDPANPLAVSKATQK) the chain is on the extracellular side. Residues 70-90 (FLYASLFPVAFIAIIFTGAEL) traverse the membrane as a helical segment. Topologically, residues 91 to 113 (FTGNTMTMLVCLLERRVTALQLC) are cytoplasmic. The chain crosses the membrane as a helical span at residues 114 to 134 (INWICSLVGNWAGALFAAYFL). Over 135–164 (SYLPGVLQDPDHLHYLEDVAAHKTELSFLQ) the chain is Extracellular. The helical transmembrane segment at 165-185 (CFCLAVGCNTFVCLAVWFVIA) threads the bilayer. Topologically, residues 186-192 (SDDAAGK) are cytoplasmic. A helical transmembrane segment spans residues 193-213 (IMSMWFPIVSFCVAGYEHIIA). Residues 214 to 237 (NFYTLQCALMHGVGPGVGTVILKN) lie on the Extracellular side of the membrane. A helical membrane pass occupies residues 238 to 258 (FIPTLLGNIVGGCGLVGAVYW). Topologically, residues 259-500 (YNFYPTVCVV…ALEEHPASTI (242 aa)) are cytoplasmic. Positions 411–500 (PLRENSGVPS…ALEEHPASTI (90 aa)) are disordered. 2 stretches are compositionally biased toward basic and acidic residues: residues 428–444 (GRVRRSSREREPERGGE) and 466–485 (FHPHVPREVEQSSLLEETRV).

It belongs to the FNT transporter (TC 1.A.16) family. Homopentamer.

It localises to the cell membrane. It catalyses the reaction (S)-lactate(in) + H(+)(in) = (S)-lactate(out) + H(+)(out). The enzyme catalyses formate(in) + H(+)(in) = formate(out) + H(+)(out). It carries out the reaction pyruvate(out) + H(+)(out) = pyruvate(in) + H(+)(in). The catalysed reaction is acetate(out) + H(+)(out) = acetate(in) + H(+)(in). Its activity is regulated as follows. Inhibited by p-chloromercuribenzene sulfonate (pCMBS). Methyl methanethiosulfonate (MMTS) inhibits L-lactate but not formate transport. Inhibited by the Malaria Box compound MMV007839. Inhibited by BH-296, BH-317, BH-326 and BH-388 compounds. Monocarboxylate-proton symporter; active in acidic-to-neutral pH range. Transports L-lactate and formate. The chain is Formate-nitrite transporter 3 from Toxoplasma gondii (strain ATCC 50611 / Me49).